Consider the following 395-residue polypeptide: uncharacterized protein (395 aa).

7 helical membrane passes run 42–62 (LKYVLVYLLSIINAFLLLIFI), 67–87 (LYSFGISSLTQGFARLVFVLL), 97–117 (LIFNILYWLLYVFINIPLIIF), 128–148 (ILSTHFVVASNVFGFLISIIP), 196–216 (FIYAAIYGFYNGISVSLLYIL), 241–261 (ILFYVNSFILIIAILIGSFVA), and 281–301 (LFFSPNLIATFFSILLTGTVV).

The protein localises to the cell membrane. This is an uncharacterized protein from Mycoplasma genitalium (strain ATCC 33530 / DSM 19775 / NCTC 10195 / G37) (Mycoplasmoides genitalium).